The sequence spans 142 residues: MFQGASALTLDAKGRMSVPSRYREALQGQAEGRVTVTKHPDGCLLLFPRPEWEVFRAKIAALPMDAHWWRRIFLGNAMDVDLDSAGRILVSPELRMAAGLEKEVMLLGMGSHFELWDAQTYTAKEQAAMAQGMPEALKNFTF.

2 SpoVT-AbrB domains span residues A5–E51 and A77–T120.

This sequence belongs to the MraZ family. As to quaternary structure, forms oligomers.

Its subcellular location is the cytoplasm. It localises to the nucleoid. This chain is Transcriptional regulator MraZ, found in Burkholderia mallei (strain NCTC 10247).